Reading from the N-terminus, the 650-residue chain is Primary amine oxidase 1 (650 aa).

A signal peptide spans 1–19 (MNTSILAILFLIQCVFTLG). 4 N-linked (GlcNAc...) asparagine glycosylation sites follow: Asn2, Asn34, Asn62, and Asn149. The cysteines at positions 155 and 176 are disulfide-linked. Residue Asn235 is glycosylated (N-linked (GlcNAc...) asparagine). 308–319 (FMDIGEFGFGRS) contributes to the substrate binding site. Asp310 acts as the Proton acceptor in catalysis. The cysteines at positions 329 and 355 are disulfide-linked. 395–400 (LGNYDY) is a substrate binding site. The Schiff-base intermediate with substrate; via topaquinone role is filled by Tyr398. Residue Tyr398 is modified to 2',4',5'-topaquinone. Residues His453 and His455 each coordinate Cu cation. Positions 462 and 464 each coordinate Mn(2+). Residue Asn486 is glycosylated (N-linked (GlcNAc...) asparagine). Asp607 and Ile608 together coordinate Mn(2+). His618 contributes to the Cu cation binding site.

It belongs to the copper/topaquinone oxidase family. As to quaternary structure, homodimer. Requires L-topaquinone as cofactor. Cu cation serves as cofactor. Zn(2+) is required as a cofactor. The cofactor is Mn(2+). In terms of processing, topaquinone (TPQ) is generated by copper-dependent autoxidation of a specific tyrosyl residue. In terms of tissue distribution, expressed in the vascular tissues at the division/differentiation transition zone.

The protein localises to the secreted. The catalysed reaction is a primary methyl amine + O2 + H2O = an aldehyde + H2O2 + NH4(+). Its activity is regulated as follows. Repressed by semi-carbazide, a specific and irreversible inhibitor of copper amine oxidases. Functionally, oxidizes preferentially the aliphatic diamine putrescine with production of the corresponding aldehyde, ammonia and hydrogen peroxide. May be involved in the regulation of developmental programmed cell death (PCD) in both vascular tissue and the root cap. Required for jasmonic acid-(MeJA) mediated early protoxylem differentiation associated with putrescine levels reduction and H(2)O(2) accumulation in roots. The chain is Primary amine oxidase 1 from Arabidopsis thaliana (Mouse-ear cress).